The following is a 204-amino-acid chain: Dephospho-CoA kinase (204 aa).

One can recognise a DPCK domain in the interval 12–204 (RIGVTGGIAS…AWRDQISSIC (193 aa)). 20-25 (ASGKSS) contacts ATP.

It belongs to the CoaE family.

The protein localises to the cytoplasm. The enzyme catalyses 3'-dephospho-CoA + ATP = ADP + CoA + H(+). It functions in the pathway cofactor biosynthesis; coenzyme A biosynthesis; CoA from (R)-pantothenate: step 5/5. Its function is as follows. Catalyzes the phosphorylation of the 3'-hydroxyl group of dephosphocoenzyme A to form coenzyme A. The sequence is that of Dephospho-CoA kinase from Prochlorococcus marinus (strain MIT 9313).